Consider the following 265-residue polypeptide: 4-diphosphocytidyl-2-C-methyl-D-erythritol kinase (265 aa).

The active site involves lysine 8. 95–105 (PIGAGLGGGSS) is an ATP binding site. Residue aspartate 135 is part of the active site.

The protein belongs to the GHMP kinase family. IspE subfamily.

It catalyses the reaction 4-CDP-2-C-methyl-D-erythritol + ATP = 4-CDP-2-C-methyl-D-erythritol 2-phosphate + ADP + H(+). It participates in isoprenoid biosynthesis; isopentenyl diphosphate biosynthesis via DXP pathway; isopentenyl diphosphate from 1-deoxy-D-xylulose 5-phosphate: step 3/6. Catalyzes the phosphorylation of the position 2 hydroxy group of 4-diphosphocytidyl-2C-methyl-D-erythritol. The chain is 4-diphosphocytidyl-2-C-methyl-D-erythritol kinase from Ureaplasma urealyticum serovar 10 (strain ATCC 33699 / Western).